A 154-amino-acid chain; its full sequence is Large ribosomal subunit protein eL24 (154 aa).

A disordered region spans residues Ala-92 to Arg-154. Residues Gln-96–Gly-122 show a composition bias toward basic and acidic residues. Over residues Lys-129–Arg-154 the composition is skewed to low complexity.

This sequence belongs to the eukaryotic ribosomal protein eL24 family.

The protein is Large ribosomal subunit protein eL24 (RPL24) of Branchiostoma belcheri (Amphioxus).